The primary structure comprises 175 residues: dATP triphosphohydrolase (175 aa).

Residue R19 participates in dATP binding. 6 residues coordinate Co(2+): H34, H66, D67, E70, D75, and D119.

This sequence belongs to the Caudovirales dATP triphosphohydrolase family. In terms of assembly, homohexamer. It depends on Co(2+) as a cofactor. Zn(2+) is required as a cofactor.

The enzyme catalyses dATP + H2O = 2'-deoxyadenosine + triphosphate + H(+). It catalyses the reaction dADP + H2O = 2'-deoxyadenosine + diphosphate. The catalysed reaction is dAMP + H2O = 2'-deoxyadenosine + phosphate. In terms of biological role, catalyzes the hydrolysis of dATP, dADP and dAMP into dA. This step is essential for Z-genome synthesis (containing aminoadenine instead of adenine). Specifically removes dATP and its precursor dADP from the nucleotide pool of the host, preventing the incorporation of A into the phage genome and favoring the integration of the Z-base into the viral genome. The sequence is that of dATP triphosphohydrolase (datZ) from Cyanophage S-2L (Cyanobacteria phage S-2L).